We begin with the raw amino-acid sequence, 129 residues long: Protein RALF-like 34 (129 aa).

The first 23 residues, 1–23, serve as a signal peptide directing secretion; it reads MAASSLNLLLILSLLTFISLQRS. Residues 24–76 constitute a propeptide, removed in mature form; it reads ESLSDNPSLTLLPDGFDWPISHSDEFDIIDGEESFEVTEEDDGVTDRRSLYWR. 2 cysteine pairs are disulfide-bonded: C94/C107 and C121/C127.

It belongs to the plant rapid alkalinization factor (RALF) family. Proteolytically cleaved, probably by S1P, a subtilisin-like serine protease (subtilase). In terms of tissue distribution, expressed in roots, stems and leaves.

The protein resides in the secreted. Its function is as follows. Cell signaling peptide that may regulate plant stress, growth, and development. Mediates a rapid alkalinization of extracellular space by mediating a transient increase in the cytoplasmic Ca(2+) concentration leading to a calcium-dependent signaling events through a cell surface receptor and a concomitant activation of some intracellular mitogen-activated protein kinases. The sequence is that of Protein RALF-like 34 (RALFL34) from Arabidopsis thaliana (Mouse-ear cress).